The sequence spans 758 residues: Amyloid beta precursor protein binding family B member 2 (758 aa).

S123 is modified (phosphoserine). The segment at 134 to 154 is disordered; sequence KLEGKEPHPQDSSSCEILPSQ. S160 is subject to Phosphoserine. Residues 176–190 show a composition bias toward basic and acidic residues; that stretch reads EQNRGNHHGTAEEKS. 3 disordered regions span residues 176 to 195, 206 to 295, and 326 to 351; these read EQNR…PVQG, LLLQ…LPPG, and DLQG…KQPW. 2 stretches are compositionally biased toward polar residues: residues 212–230 and 261–275; these read NRPQ…SSSP and SWTT…PSSP. The 33-residue stretch at 290 to 322 folds into the WW domain; it reads PDLPPGWKRVSDIAGTYYWHIPTGTTQWERPVS. The segment covering 331-340 has biased composition (polar residues); sequence RKGSLSSVTP. Residues S334, S409, and S412 each carry the phosphoserine modification. 2 PID domains span residues 413 to 578 and 584 to 736; these read DPEA…LQVD and TELV…VTTN.

As to quaternary structure, interacts (via C-terminus) with APP (via C-terminus). Interacts with APLP2 (via cytoplasmic domain). Widely expressed.

It localises to the endoplasmic reticulum. The protein localises to the golgi apparatus. Its subcellular location is the early endosome. In terms of biological role, plays a role in the maintenance of lens transparency, and may also play a role in muscle cell strength. Involved in hippocampal neurite branching and neuromuscular junction formation, as a result plays a role in spatial memory functioning. Activates transcription of APP. This is Amyloid beta precursor protein binding family B member 2 from Homo sapiens (Human).